Here is a 373-residue protein sequence, read N- to C-terminus: D-alanine--D-alanine ligase (373 aa).

In terms of domain architecture, ATP-grasp spans 156–363 (KKLLAADGLP…YPTLLATMIE (208 aa)). Position 184–239 (184–239 (CERLGLPVFVKPARGGSSIGVSRVSSWDQLPAAVARARRHDPKVIVEAAISGRELE)) interacts with ATP. Mg(2+) contacts are provided by Asp-318, Glu-330, and Asn-332.

Belongs to the D-alanine--D-alanine ligase family. The cofactor is Mg(2+). Requires Mn(2+) as cofactor.

It localises to the cytoplasm. It carries out the reaction 2 D-alanine + ATP = D-alanyl-D-alanine + ADP + phosphate + H(+). The protein operates within cell wall biogenesis; peptidoglycan biosynthesis. Functionally, cell wall formation. This Mycobacterium bovis (strain BCG / Pasteur 1173P2) protein is D-alanine--D-alanine ligase.